The primary structure comprises 346 residues: DNA primase small subunit PriS (346 aa).

Residues Asp97, Asp99, and Asp278 contribute to the active site.

The protein belongs to the eukaryotic-type primase small subunit family. Heterodimer of a small subunit (PriS) and a large subunit (PriL). The cofactor is Mg(2+). Mn(2+) serves as cofactor.

Catalytic subunit of DNA primase, an RNA polymerase that catalyzes the synthesis of short RNA molecules used as primers for DNA polymerase during DNA replication. The small subunit contains the primase catalytic core and has DNA synthesis activity on its own. Binding to the large subunit stabilizes and modulates the activity, increasing the rate of DNA synthesis while decreasing the length of the DNA fragments, and conferring RNA synthesis capability. The DNA polymerase activity may enable DNA primase to also catalyze primer extension after primer synthesis. May also play a role in DNA repair. The chain is DNA primase small subunit PriS from Thermococcus onnurineus (strain NA1).